Reading from the N-terminus, the 160-residue chain is pH-gated potassium channel KcsA (160 aa).

Residues 1 to 27 lie on the Cytoplasmic side of the membrane; that stretch reads MPPMLSGLLARLVKLLLGRHGSALHWR. Residues 28-50 form a helical membrane-spanning segment; sequence AAGAATVLLVIVLLAGSYLAVLA. The Extracellular segment spans residues 51–61; that stretch reads ERGAPGAQLIT. Residues 62–72 constitute an intramembrane region (helical; Pore-forming); the sequence is YPRALWWSVET. Residues 73–80 constitute an intramembrane region (pore-forming); it reads ATTVGYGD. Residues 75 to 80 carry the Selectivity filter motif; sequence TVGYGD. Topologically, residues 81–87 are extracellular; that stretch reads LYPVTLW. Residues 88–111 form a helical membrane-spanning segment; sequence GRLVAVVVMVAGITSFGLVTAALA. The Cytoplasmic segment spans residues 112–160; that stretch reads TWFVGREQERRGHFVRHSEKAAEEAYTRTTRALHERFDRLERMLDDNRR.

This sequence belongs to the potassium channel family. In terms of assembly, homotetramer.

Its subcellular location is the cell membrane. Functionally, acts as a pH-gated potassium ion channel; changing the cytosolic pH from 7 to 4 opens the channel. The chain is pH-gated potassium channel KcsA (kcsA) from Streptomyces coelicolor (strain ATCC BAA-471 / A3(2) / M145).